Reading from the N-terminus, the 342-residue chain is Periplasmic protein TorT (342 aa).

The first 18 residues, 1–18 (MRVLLFLLLSLFMLPAFS), serve as a signal peptide directing secretion.

This sequence belongs to the bacterial solute-binding protein 2 family.

Its subcellular location is the periplasm. Upon binding a putative inducer it probably interacts with TorS and allows it to play a role in the induction of the torCAD operon for trimethylamine N-oxide reductase. This chain is Periplasmic protein TorT (torT), found in Escherichia coli (strain K12).